The following is a 180-amino-acid chain: MLPMVTGFMNYGQQTVRAARYIGQSFMITLSHANRLPVTIQYPYEKLITSERFRGRIHFEFDKCIACEVCVRVCPIDLPVVNWRLETDIRKKRLLNYSIDFGICIFCGNCVEYCPTNCLSMTEEYELSTYDRHELNYNQIALGRLPISVIGDYTIRTIMNSTQIKIATGKPLDSKTITNY.

4Fe-4S ferredoxin-type domains follow at residues 55 to 84 (GRIH…VNWR) and 95 to 124 (LNYS…MTEE). Residues Cys64, Cys67, Cys70, Cys74, Cys104, Cys107, Cys110, and Cys114 each contribute to the [4Fe-4S] cluster site.

Belongs to the complex I 23 kDa subunit family. In terms of assembly, NDH is composed of at least 16 different subunits, 5 of which are encoded in the nucleus. It depends on [4Fe-4S] cluster as a cofactor.

The protein resides in the plastid. It is found in the chloroplast thylakoid membrane. The catalysed reaction is a plastoquinone + NADH + (n+1) H(+)(in) = a plastoquinol + NAD(+) + n H(+)(out). It catalyses the reaction a plastoquinone + NADPH + (n+1) H(+)(in) = a plastoquinol + NADP(+) + n H(+)(out). Functionally, NDH shuttles electrons from NAD(P)H:plastoquinone, via FMN and iron-sulfur (Fe-S) centers, to quinones in the photosynthetic chain and possibly in a chloroplast respiratory chain. The immediate electron acceptor for the enzyme in this species is believed to be plastoquinone. Couples the redox reaction to proton translocation, and thus conserves the redox energy in a proton gradient. The polypeptide is NAD(P)H-quinone oxidoreductase subunit I, chloroplastic (Platanus occidentalis (Sycamore)).